The chain runs to 94 residues: CRISPR-associated endoribonuclease Cas2 1 (94 aa).

Asp8 lines the Mg(2+) pocket.

This sequence belongs to the CRISPR-associated endoribonuclease Cas2 protein family. In terms of assembly, homodimer, forms a heterotetramer with a Cas1 homodimer. Mg(2+) serves as cofactor.

In terms of biological role, CRISPR (clustered regularly interspaced short palindromic repeat), is an adaptive immune system that provides protection against mobile genetic elements (viruses, transposable elements and conjugative plasmids). CRISPR clusters contain sequences complementary to antecedent mobile elements and target invading nucleic acids. CRISPR clusters are transcribed and processed into CRISPR RNA (crRNA). Involved in the integration of spacer DNA into the CRISPR cassette. Functions as a ssRNA-specific endoribonuclease. This chain is CRISPR-associated endoribonuclease Cas2 1 (cas21), found in Archaeoglobus fulgidus (strain ATCC 49558 / DSM 4304 / JCM 9628 / NBRC 100126 / VC-16).